Consider the following 297-residue polypeptide: Heterogeneous nuclear ribonucleoprotein D-like (297 aa).

The disordered stretch occupies residues 1 to 21 (MTGFGATPDFNEGSKINASKN). RRM domains are found at residues 26–108 (GKMF…KGKE) and 111–190 (KKVF…QPKE). Positions 192-224 (YRQQQQKQQKGGRGAATGRGGARGRGRGQGWNQ) are disordered. Over residues 202–222 (GGRGAATGRGGARGRGRGQGW) the composition is skewed to gly residues.

The protein localises to the nucleus. It is found in the cytoplasm. Acts as a transcriptional regulator. Binds DNA and RNA. The sequence is that of Heterogeneous nuclear ribonucleoprotein D-like (hnrnpdl) from Xenopus tropicalis (Western clawed frog).